The chain runs to 778 residues: Protein PHOTOPERIODIC CONTROL OF HYPOCOTYL 1 (778 aa).

Disordered stretches follow at residues 74–95, 186–283, and 316–335; these read QKRETTTTTTTKPSFHEDVGSS, HNRG…NSAT, and KTSPSDSSETKSMMKMKEAS. The span at 198–212 shows a compositional bias: basic and acidic residues; the sequence is SSKDTQEDGPRKNES. Over residues 230–247 the composition is skewed to low complexity; sequence SGSISSSSTKGKGIKGYS. The span at 265-275 shows a compositional bias: basic and acidic residues; that stretch reads PDRENSVDGHQ. The span at 317 to 326 shows a compositional bias: polar residues; sequence TSPSDSSETK. The F-box domain maps to 470 to 505; it reads WPLLPNDLLELIMGHLETSFEIFLFRSVCSSWRSVV.

As to quaternary structure, interacts with light-activated phyB. Binds directly to PIF1 and COP1. In terms of processing, ubiquitinated by COP1 in darkness; this leads to proteasomal degradation. Mainly expressed in cotyledons, hypocotyls, leaves and roots.

The protein localises to the nucleus. In terms of biological role, together with PCHL, regulates growth and development adaptation to the ambient environment by controlling negatively phytochrome B (phyB) dark reversion, a temperature-dependent thermal relaxation process during which phyB reverts from the active to the inactive state. Contributes to red (R) light-triggered photomorphogenesis. Promotes various light responses such as seed germination, hypocotyl gravitropism and chlorophyll biosynthesis, via direct interaction with PIF1 and COP1. Prevents DNA-binding ability of PIF1 to negatively regulate the expressions of its target genes. Facilitates the physical interaction between phyB and PIF1 and the subsequent light-induced degradation of PIF1. The chain is Protein PHOTOPERIODIC CONTROL OF HYPOCOTYL 1 from Arabidopsis thaliana (Mouse-ear cress).